The chain runs to 183 residues: MDIDPYKEFGASVELLSFLPSDFFPSVRDLLDTASALYRDALESPEHCTPNHTALRQAILCWGELMTLASWVGNNLEDPAARDLVVNYVNTNMGLKIRQLLWFHISCLTFGRDTVLEYLVSFGVWIRTPPAYRPPNAPILSTLPETTVVRQRGRAPRRRTPSPRRRRSQSPRRRRSQSPASQC.

The tract at residues 136–183 (NAPILSTLPETTVVRQRGRAPRRRTPSPRRRRSQSPRRRRSQSPASQC) is disordered. The span at 151 to 176 (QRGRAPRRRTPSPRRRRSQSPRRRRS) shows a compositional bias: basic residues. One copy of the 1; half-length repeat lies at 155–161 (APRRRTP). Residues 155-177 (APRRRTPSPRRRRSQSPRRRRSQ) are 3 X 8 AA repeats of S-P-R-R-R-[PR]-S-Q. Positions 158–175 (RRTPSPRRRRSQSPRRRR) match the Bipartite nuclear localization signal motif. Phosphoserine; by host occurs at positions 162 and 170. 2 repeat units span residues 162-169 (SPRRRRSQ) and 170-177 (SPRRRRSQ). The interval 177–183 (QSPASQC) is RNA binding.

This sequence belongs to the orthohepadnavirus core antigen family. As to quaternary structure, homodimerizes, then multimerizes. Interacts with cytosol exposed regions of viral L glycoprotein present in the reticulum-to-Golgi compartment. Interacts with human FLNB. Phosphorylated form interacts with host importin alpha; this interaction depends on the exposure of the NLS, which itself depends upon genome maturation and/or phosphorylation of the capsid protein. Interacts with host NUP153. Phosphorylated by host SRPK1, SRPK2, and maybe protein kinase C or GAPDH. Phosphorylation is critical for pregenomic RNA packaging. Protein kinase C phosphorylation is stimulated by HBx protein and may play a role in transport of the viral genome to the nucleus at the late step during the viral replication cycle.

The protein localises to the virion. Its subcellular location is the host cytoplasm. Functionally, self assembles to form an icosahedral capsid. Most capsids appear to be large particles with an icosahedral symmetry of T=4 and consist of 240 copies of capsid protein, though a fraction forms smaller T=3 particles consisting of 180 capsid proteins. Entering capsids are transported along microtubules to the nucleus. Phosphorylation of the capsid is thought to induce exposure of nuclear localization signal in the C-terminal portion of the capsid protein that allows binding to the nuclear pore complex via the importin (karyopherin-) alpha and beta. Capsids are imported in intact form through the nuclear pore into the nuclear basket, where it probably binds NUP153. Only capsids that contain the mature viral genome can release the viral DNA and capsid protein into the nucleoplasm. Immature capsids get stuck in the basket. Capsids encapsulate the pre-genomic RNA and the P protein. Pre-genomic RNA is reverse-transcribed into DNA while the capsid is still in the cytoplasm. The capsid can then either be directed to the nucleus, providing more genomes for transcription, or bud through the endoplasmic reticulum to provide new virions. The sequence is that of Capsid protein from Homo sapiens (Human).